The following is a 360-amino-acid chain: Viral protein TPX (360 aa).

The interval 269–289 is disordered; sequence TVTPISSPSPTPTPTPTPTPT. Residues 270-291 form a Thr-Pro(N) repeat; sequence VTPISSPSPTPTPTPTPTPTPT. The segment covering 275–289 has biased composition (pro residues); the sequence is SPSPTPTPTPTPTPT. Positions 278–353 are 3 Thr-Pro repeats regions and two near identical repeats; that stretch reads PTPTPTPTPT…PTPTPTPTPT (76 aa). Positions 292–301 form a repeat; sequence YDITYVVFDV. The stretch at 302 to 322 is one Thr-Pro(N) repeat; the sequence is TPSPTPTPTLTSTPTPTPTPT. Residues 323 to 332 constitute a repeat; it reads YDITYVIFDV. Residues 332-360 form a disordered region; the sequence is VTPSPTPTPTPTPTPTPTPTPTSTTSSNI. Residues 333-353 form a Thr-Pro(N) repeat; sequence TPSPTPTPTPTPTPTPTPTPT. The span at 335 to 351 shows a compositional bias: pro residues; the sequence is SPTPTPTPTPTPTPTPT.

In Thermoproteus tenax (TTV1), this protein is Viral protein TPX.